Reading from the N-terminus, the 331-residue chain is Ketol-acid reductoisomerase (NADP(+)) (331 aa).

A KARI N-terminal Rossmann domain is found at alanine 2 to threonine 182. Residues tyrosine 25–glutamine 28, serine 51, serine 53, and aspartate 83–glutamine 86 contribute to the NADP(+) site. Histidine 108 is an active-site residue. Glycine 134 provides a ligand contact to NADP(+). Residues serine 183–leucine 328 form the KARI C-terminal knotted domain. Aspartate 191, glutamate 195, glutamate 227, and glutamate 231 together coordinate Mg(2+). Serine 252 serves as a coordination point for substrate.

Belongs to the ketol-acid reductoisomerase family. It depends on Mg(2+) as a cofactor.

The enzyme catalyses (2R)-2,3-dihydroxy-3-methylbutanoate + NADP(+) = (2S)-2-acetolactate + NADPH + H(+). The catalysed reaction is (2R,3R)-2,3-dihydroxy-3-methylpentanoate + NADP(+) = (S)-2-ethyl-2-hydroxy-3-oxobutanoate + NADPH + H(+). It participates in amino-acid biosynthesis; L-isoleucine biosynthesis; L-isoleucine from 2-oxobutanoate: step 2/4. Its pathway is amino-acid biosynthesis; L-valine biosynthesis; L-valine from pyruvate: step 2/4. Involved in the biosynthesis of branched-chain amino acids (BCAA). Catalyzes an alkyl-migration followed by a ketol-acid reduction of (S)-2-acetolactate (S2AL) to yield (R)-2,3-dihydroxy-isovalerate. In the isomerase reaction, S2AL is rearranged via a Mg-dependent methyl migration to produce 3-hydroxy-3-methyl-2-ketobutyrate (HMKB). In the reductase reaction, this 2-ketoacid undergoes a metal-dependent reduction by NADPH to yield (R)-2,3-dihydroxy-isovalerate. This chain is Ketol-acid reductoisomerase (NADP(+)), found in Gloeothece citriformis (strain PCC 7424) (Cyanothece sp. (strain PCC 7424)).